Consider the following 349-residue polypeptide: Fe(3+) ions import ATP-binding protein FbpC (349 aa).

In terms of domain architecture, ABC transporter spans L4–L236. Residue G36 to T43 coordinates ATP.

Belongs to the ABC transporter superfamily. Fe(3+) ion importer (TC 3.A.1.10) family. As to quaternary structure, the complex is composed of two ATP-binding proteins (FbpC), two transmembrane proteins (FbpB) and a solute-binding protein (FbpA).

It is found in the cell inner membrane. The catalysed reaction is Fe(3+)(out) + ATP + H2O = Fe(3+)(in) + ADP + phosphate + H(+). Its function is as follows. Part of the ABC transporter complex FbpABC involved in Fe(3+) ions import. Responsible for energy coupling to the transport system. The sequence is that of Fe(3+) ions import ATP-binding protein FbpC from Yersinia enterocolitica.